The primary structure comprises 182 residues: Putative manganese efflux pump MntP (182 aa).

Helical transmembrane passes span L6 to G26, I37 to V57, H71 to L91, I101 to L121, I131 to I151, and Y162 to I182.

Belongs to the MntP (TC 9.B.29) family.

The protein resides in the cell membrane. In terms of biological role, probably functions as a manganese efflux pump. This is Putative manganese efflux pump MntP from Bacillus anthracis (strain A0248).